Here is a 33-residue protein sequence, read N- to C-terminus: GFFALIPKIISSPIFKTLLSAVGSALSSSGGQE.

Belongs to the pardaxin family. In aqueous solution exists as a tetramer.

It localises to the secreted. Its subcellular location is the target cell membrane. Functionally, exhibits unusual shark repellent and surfactant properties. Forms voltage-dependent, ion-permeable channels in membranes. At high concentration causes cell membrane lysis. In Pardachirus pavoninus (Peacock sole), this protein is Pardaxin P-2.